Reading from the N-terminus, the 442-residue chain is tRNA-2-methylthio-N(6)-dimethylallyladenosine synthase (442 aa).

In terms of domain architecture, MTTase N-terminal spans 5–122 (KKVFIKTLGC…LPEMIKQKQK (118 aa)). Positions 14, 51, 85, 159, 163, and 166 each coordinate [4Fe-4S] cluster. The region spanning 145–378 (KAEGAKAYVS…DLLNSNAQII (234 aa)) is the Radical SAM core domain. The 63-residue stretch at 380–442 (RQMVGTNQRI…LPNSLRGELI (63 aa)) folds into the TRAM domain.

Belongs to the methylthiotransferase family. MiaB subfamily. Monomer. The cofactor is [4Fe-4S] cluster.

It is found in the cytoplasm. It carries out the reaction N(6)-dimethylallyladenosine(37) in tRNA + (sulfur carrier)-SH + AH2 + 2 S-adenosyl-L-methionine = 2-methylsulfanyl-N(6)-dimethylallyladenosine(37) in tRNA + (sulfur carrier)-H + 5'-deoxyadenosine + L-methionine + A + S-adenosyl-L-homocysteine + 2 H(+). Functionally, catalyzes the methylthiolation of N6-(dimethylallyl)adenosine (i(6)A), leading to the formation of 2-methylthio-N6-(dimethylallyl)adenosine (ms(2)i(6)A) at position 37 in tRNAs that read codons beginning with uridine. This is tRNA-2-methylthio-N(6)-dimethylallyladenosine synthase from Francisella tularensis subsp. tularensis (strain FSC 198).